The chain runs to 396 residues: Bifunctional enzyme Fae/Hps (396 aa).

The segment at Met1 to Val161 is formaldehyde-activating enzyme. His17 (proton donor) is an active-site residue. Substrate contacts are provided by Asp19, Leu48, Lys66, Thr68, and Gln83. A 3-hexulose-6-phosphate synthase region spans residues Met162–Phe396.

It in the N-terminal section; belongs to the formaldehyde-activating enzyme family. This sequence in the C-terminal section; belongs to the HPS/KGPDC family. HPS subfamily.

The enzyme catalyses 5,6,7,8-tetrahydromethanopterin + formaldehyde = 5,10-methylenetetrahydromethanopterin + H2O. It carries out the reaction D-ribulose 5-phosphate + formaldehyde = D-arabino-hex-3-ulose 6-phosphate. It functions in the pathway carbohydrate biosynthesis; D-ribose 5-phosphate biosynthesis. Its function is as follows. Catalyzes the condensation of formaldehyde with tetrahydromethanopterin (H(4)MPT) to 5,10-methylenetetrahydromethanopterin. Functionally, catalyzes the reversible formation of ribulose-5-phosphate and formaldehyde from 3-hexulose-6-phosphate. The chain is Bifunctional enzyme Fae/Hps from Methanococcoides burtonii (strain DSM 6242 / NBRC 107633 / OCM 468 / ACE-M).